A 144-amino-acid chain; its full sequence is Large ribosomal subunit protein uL15 (144 aa).

The interval M1 to Y45 is disordered. Residues R21–C31 show a composition bias toward gly residues.

Belongs to the universal ribosomal protein uL15 family. As to quaternary structure, part of the 50S ribosomal subunit.

In terms of biological role, binds to the 23S rRNA. The polypeptide is Large ribosomal subunit protein uL15 (Legionella pneumophila (strain Paris)).